Consider the following 202-residue polypeptide: NADH-quinone oxidoreductase subunit C (202 aa).

This sequence belongs to the complex I 30 kDa subunit family. NDH-1 is composed of 14 different subunits. Subunits NuoB, C, D, E, F, and G constitute the peripheral sector of the complex.

Its subcellular location is the cell inner membrane. The enzyme catalyses a quinone + NADH + 5 H(+)(in) = a quinol + NAD(+) + 4 H(+)(out). In terms of biological role, NDH-1 shuttles electrons from NADH, via FMN and iron-sulfur (Fe-S) centers, to quinones in the respiratory chain. The immediate electron acceptor for the enzyme in this species is believed to be ubiquinone. Couples the redox reaction to proton translocation (for every two electrons transferred, four hydrogen ions are translocated across the cytoplasmic membrane), and thus conserves the redox energy in a proton gradient. The chain is NADH-quinone oxidoreductase subunit C from Hyphomonas neptunium (strain ATCC 15444).